A 462-amino-acid polypeptide reads, in one-letter code: Coagulation factor IX (462 aa).

Residues 1-21 form the signal peptide; it reads MADAPGLIPIFLLGYLLSTEC. The propeptide occupies 22-39; sequence AVFLDRENATKILTRPKR. Tyr-40, Asn-41, Glu-46, Glu-47, Glu-54, Glu-56, Glu-59, Glu-60, Glu-65, Glu-66, and Glu-69 together coordinate Ca(2+). The Gla domain occupies 40-86; sequence YNSGKLEEFVQGNLERECIEERCSFEEAREVFENTEKTTEFWKQYVD. 4-carboxyglutamate occurs at positions 46, 47, 54, 56, 59, 60, 65, 66, 69, 72, and 75. Position 54 (Glu-54) interacts with Mg(2+). Residues Cys-57 and Cys-62 are joined by a disulfide bond. Glu-59 lines the Mg(2+) pocket. Glu-65 contributes to the Mg(2+) binding site. Residue Glu-69 coordinates Mg(2+). Glu-75 lines the Ca(2+) pocket. Glu-75 contacts Mg(2+). O-linked (GalNAc...) threonine glycosylation is present at Thr-78. Ca(2+) is bound by residues Glu-79, Asp-86, Gly-87, and Gln-89. At Glu-79 the chain carries 4-carboxyglutamate. Glu-79 contributes to the Mg(2+) binding site. The 37-residue stretch at 86–122 folds into the EGF-like; calcium-binding domain; sequence DGDQCESNPCLNGGICKDDINSYECWCQAGFEGRNCE. 10 cysteine pairs are disulfide-bonded: Cys-90–Cys-101, Cys-95–Cys-110, Cys-112–Cys-121, Cys-127–Cys-138, Cys-134–Cys-148, Cys-150–Cys-163, Cys-171–Cys-336, Cys-253–Cys-269, Cys-383–Cys-397, and Cys-408–Cys-436. Residue Ser-92 is glycosylated (O-linked (Glc...) serine). Ca(2+) is bound by residues Asp-103 and Asp-104. (3R)-3-hydroxyaspartate is present on Asp-103. Ser-107 carries the post-translational modification Phosphoserine. Residues 186 to 227 constitute a propeptide, activation peptide; it reads AETVFSNTDYGNSTELILDDITNSTILDNLTENSEPINDFTR. Tyr-195 is modified (sulfotyrosine). Ser-198 is modified (phosphoserine). Thr-199 is modified (phosphothreonine; alternate). O-linked (GalNAc...) threonine; alternate glycosylation occurs at Thr-199. N-linked (GlcNAc...) asparagine glycosylation is found at Asn-208 and Asn-214. O-linked (GalNAc...) threonine glycans are attached at residues Thr-216 and Thr-226. The Peptidase S1 domain occupies 228-460; the sequence is VVGGENAKPG…YVNWIKEKTK (233 aa). His-268 acts as the Charge relay system in catalysis. Ca(2+) is bound by residues Glu-282, Asn-284, Glu-287, Glu-289, and Glu-292. The N-linked (GlcNAc...) asparagine glycan is linked to Asn-307. Asp-316 acts as the Charge relay system in catalysis. Ser-412 acts as the Charge relay system in catalysis.

The protein belongs to the peptidase S1 family. As to quaternary structure, heterodimer of a light chain and a heavy chain; disulfide-linked. Interacts (inactive and activated) with F11 (activated) in calcium-dependent manner. Interacts with SERPINC1. Interacts (inactive and activated) with nitrophorin-2, an anticoagulant protein from Rhodnius prolixus. Activated by factor XIa, which excises the activation peptide. The propeptide can also be removed by snake venom protease. Activated by coagulation factor VIIa-tissue factor (F7-F3) complex in calcium-dependent manner. Post-translationally, the iron and 2-oxoglutarate dependent 3-hydroxylation of aspartate and asparagine is (R) stereospecific within EGF domains. In terms of processing, predominantly O-glucosylated at Ser-92 by POGLUT1 in vitro.

The protein resides in the secreted. The catalysed reaction is Selective cleavage of Arg-|-Ile bond in factor X to form factor Xa.. In terms of biological role, factor IX is a vitamin K-dependent plasma protein that participates in the intrinsic pathway of blood coagulation by converting factor X to its active form in the presence of Ca(2+) ions, phospholipids, and factor VIIIa. The sequence is that of Coagulation factor IX (F9) from Rattus norvegicus (Rat).